Here is a 1562-residue protein sequence, read N- to C-terminus: Neuralized-like protein 4 (1562 aa).

The segment covering 1–42 (MAAGSGGSGGSGGGPGPGPGGGGGPSGSGSGPGSNGGLGSGG) has biased composition (gly residues). Disordered stretches follow at residues 1-48 (MAAG…HPRT) and 207-236 (PEPG…LAEQ). NHR domains are found at residues 41–207 (GGEL…VLPP) and 317–484 (ALLF…IVHN). A compositionally biased stretch (pro residues) spans 207 to 224 (PEPGFSPPTPIPTPPLEP). A Phosphoserine modification is found at S502. NHR domains are found at residues 520–686 (RLLF…IVDD) and 716–884 (DLRF…ITNA). The segment at 691 to 716 (PVPEPLPEGNNQVSPSSPSSGAGGSD) is disordered. S907 bears the Phosphoserine mark. In terms of domain architecture, NHR 5 spans 913–1086 (AHRFHSTCGK…PVRGVSIVSS (174 aa)). Positions 1086–1123 (STRLEESEGTQPPSPSSDTGSEGEEDDEGEEHGLGGQN) are disordered. The span at 1106–1115 (SEGEEDDEGE) shows a compositional bias: acidic residues. Positions 1131 to 1294 (TLEFLENHGK…QCEQVTIVNP (164 aa)) constitute an NHR 6 domain.

Interacts with CCP110; this interaction propmotes CCP110 ubiquitination and degradation via the proteasome pathway. Via its interaction with CCP110, may indirectly interact with CEP97. Interacts with the E3 ubiquitin-protein ligase HERC2 and UBE3A. May interact with MAPK6 and hence mediate MAPK6 interaction with UBE3A. Interaction with UBE3A may be indirect and mediated by HERC2. Ubiquitinated; undergoes HERC2-dependent 'Lys-48' ubiquitination. This ubiquitination leads to proteasomal degradation. As to expression, widely expressed at high levels (including brain).

The protein resides in the cytoplasm. The protein localises to the cytoskeleton. Its subcellular location is the microtubule organizing center. It is found in the centrosome. It localises to the centriole. Functionally, promotes CCP110 ubiquitination and proteasome-dependent degradation. By counteracting accumulation of CP110, maintains normal centriolar homeostasis and preventing formation of ectopic microtubular organizing centers. The polypeptide is Neuralized-like protein 4 (NEURL4) (Homo sapiens (Human)).